The following is a 627-amino-acid chain: Carnitine O-acetyltransferase (627 aa).

Residues 1 to 30 (MDRKQKQAEKARPYGLLKPAALGKIPGRFQ) constitute a propeptide that is removed on maturation. K94 carries the N6-succinyllysine modification. Residue K262 is modified to N6-acetyllysine; alternate. N6-succinyllysine; alternate is present on K262. Residue K269 is modified to N6-acetyllysine. H344 functions as the Proton acceptor in the catalytic mechanism. CoA contacts are provided by residues K420 and 424–431 (KSEKISPD). (R)-carnitine-binding residues include Y453 and S455. A CoA-binding site is contributed by S457. Position 466 (T466) interacts with (R)-carnitine. Q556 is a CoA binding site. The short motif at 625-627 (SKL) is the Microbody targeting signal element.

It belongs to the carnitine/choline acetyltransferase family. In terms of assembly, monomer.

It is found in the endoplasmic reticulum. The protein resides in the peroxisome. Its subcellular location is the mitochondrion inner membrane. It carries out the reaction (R)-carnitine + acetyl-CoA = O-acetyl-(R)-carnitine + CoA. The enzyme catalyses propanoyl-CoA + (R)-carnitine = O-propanoyl-(R)-carnitine + CoA. It catalyses the reaction butanoyl-CoA + (R)-carnitine = O-butanoyl-(R)-carnitine + CoA. The catalysed reaction is hexanoyl-CoA + (R)-carnitine = O-hexanoyl-(R)-carnitine + CoA. It carries out the reaction octanoyl-CoA + (R)-carnitine = O-octanoyl-(R)-carnitine + CoA. The enzyme catalyses decanoyl-CoA + (R)-carnitine = O-decanoyl-(R)-carnitine + CoA. It catalyses the reaction 3-methylbutanoyl-CoA + (R)-carnitine = O-3-methylbutanoyl-(R)-carnitine + CoA. The catalysed reaction is 2-methylpropanoyl-CoA + (R)-carnitine = O-isobutanoyl-(R)-carnitine + CoA. It carries out the reaction 2-methylbutanoyl-CoA + (R)-carnitine = O-2-methylbutanoyl-(R)-carnitine + CoA. The enzyme catalyses acetoacetyl-CoA + (R)-carnitine = O-3-oxobutanoyl-(R)-carnitine + CoA. It catalyses the reaction 3-hydroxybutanoyl-CoA + (R)-carnitine = O-3-hydroxybutanoyl-(R)-carnitine + CoA. The catalysed reaction is 4,8-dimethylnonanoyl-CoA + (R)-carnitine = O-4,8-dimethylnonanoyl-(R)-carnitine + CoA. It carries out the reaction 2,6-dimethylheptanoyl-CoA + (R)-carnitine = O-2,6-dimethylheptanoyl-(R)-carnitine + CoA. In terms of biological role, catalyzes the reversible transfer of acyl groups from carnitine to coenzyme A (CoA) and regulates the acyl-CoA/CoA ratio. Also plays a crucial role in the transport of fatty acids for beta-oxidation. Responsible for the synthesis of short- and branched-chain acylcarnitines. Active towards some branched-chain amino acid oxidation pathway (BCAAO) intermediates. Trans-2-enoyl-CoAs and 2-methylacyl-CoAs are poor substrates. In Columba livia (Rock dove), this protein is Carnitine O-acetyltransferase (CRAT).